The chain runs to 292 residues: GTP cyclohydrolase FolE2 (292 aa).

Belongs to the GTP cyclohydrolase IV family.

It carries out the reaction GTP + H2O = 7,8-dihydroneopterin 3'-triphosphate + formate + H(+). It participates in cofactor biosynthesis; 7,8-dihydroneopterin triphosphate biosynthesis; 7,8-dihydroneopterin triphosphate from GTP: step 1/1. Converts GTP to 7,8-dihydroneopterin triphosphate. The polypeptide is GTP cyclohydrolase FolE2 (Macrococcus caseolyticus (strain JCSC5402) (Macrococcoides caseolyticum)).